Reading from the N-terminus, the 93-residue chain is Em protein H5 (93 aa).

The interval 1 to 93 (MASGQQERSE…IDESKFKTKS (93 aa)) is disordered. 3 stretches are compositionally biased toward basic and acidic residues: residues 7–19 (ERSELDRMAREGE), 32–62 (EAQEHLADGRSRGGETRKEQLGEEGYREMGR), and 73–93 (GGERAAREGIEIDESKFKTKS).

It belongs to the small hydrophilic plant seed protein family.

It is thought to provide protection for the cytoplasm during the desiccation stage of embryo development. In Triticum aestivum (Wheat), this protein is Em protein H5 (EMH5).